The primary structure comprises 688 residues: Glycine--tRNA ligase beta subunit (688 aa).

The protein belongs to the class-II aminoacyl-tRNA synthetase family. As to quaternary structure, tetramer of two alpha and two beta subunits.

It is found in the cytoplasm. It carries out the reaction tRNA(Gly) + glycine + ATP = glycyl-tRNA(Gly) + AMP + diphosphate. This chain is Glycine--tRNA ligase beta subunit, found in Shewanella sp. (strain MR-7).